Here is a 295-residue protein sequence, read N- to C-terminus: 33 kDa chaperonin (295 aa).

2 disulfide bridges follow: C238/C240 and C271/C274.

The protein belongs to the HSP33 family. Under oxidizing conditions two disulfide bonds are formed involving the reactive cysteines. Under reducing conditions zinc is bound to the reactive cysteines and the protein is inactive.

Its subcellular location is the cytoplasm. Its function is as follows. Redox regulated molecular chaperone. Protects both thermally unfolding and oxidatively damaged proteins from irreversible aggregation. Plays an important role in the bacterial defense system toward oxidative stress. This is 33 kDa chaperonin from Levilactobacillus brevis (strain ATCC 367 / BCRC 12310 / CIP 105137 / JCM 1170 / LMG 11437 / NCIMB 947 / NCTC 947) (Lactobacillus brevis).